The chain runs to 421 residues: Serine hydroxymethyltransferase (421 aa).

(6S)-5,6,7,8-tetrahydrofolate contacts are provided by residues L121 and 125 to 127; that span reads GHL. At K230 the chain carries N6-(pyridoxal phosphate)lysine. 355-357 contacts (6S)-5,6,7,8-tetrahydrofolate; it reads SPF.

It belongs to the SHMT family. As to quaternary structure, homodimer. Pyridoxal 5'-phosphate is required as a cofactor.

It localises to the cytoplasm. The enzyme catalyses (6R)-5,10-methylene-5,6,7,8-tetrahydrofolate + glycine + H2O = (6S)-5,6,7,8-tetrahydrofolate + L-serine. The protein operates within one-carbon metabolism; tetrahydrofolate interconversion. It participates in amino-acid biosynthesis; glycine biosynthesis; glycine from L-serine: step 1/1. In terms of biological role, catalyzes the reversible interconversion of serine and glycine with tetrahydrofolate (THF) serving as the one-carbon carrier. This reaction serves as the major source of one-carbon groups required for the biosynthesis of purines, thymidylate, methionine, and other important biomolecules. Also exhibits THF-independent aldolase activity toward beta-hydroxyamino acids, producing glycine and aldehydes, via a retro-aldol mechanism. The polypeptide is Serine hydroxymethyltransferase (Cellvibrio japonicus (strain Ueda107) (Pseudomonas fluorescens subsp. cellulosa)).